We begin with the raw amino-acid sequence, 126 residues long: Protein MGF 100-1R (126 aa).

This sequence belongs to the asfivirus MGF 100 family.

Plays a role in virus cell tropism, and may be required for efficient virus replication in macrophages. The protein is Protein MGF 100-1R of Ornithodoros (relapsing fever ticks).